Here is a 131-residue protein sequence, read N- to C-terminus: Interleukin-13 (131 aa).

The signal sequence occupies residues 1–18; sequence MALWLTVVIALTCLGGLA. N-linked (GlcNAc...) asparagine glycans are attached at residues Asn38, Asn48, Asn56, and Asn71. Disulfide bonds link Cys47-Cys75 and Cys63-Cys89.

The protein belongs to the IL-4/IL-13 family. As to quaternary structure, interacts with IL13RA2.

It is found in the secreted. Functionally, cytokine that plays important roles in allergic inflammation and immune response to parasite infection. Synergizes with IL2 in regulating interferon-gamma synthesis. Stimulates B-cell proliferation, and activation of eosinophils, basophils, and mast cells. Plays an important role in controlling IL33 activity by modulating the production of transmembrane and soluble forms of interleukin-1 receptor-like 1/IL1RL1. Displays the capacity to antagonize Th1-driven proinflammatory immune response and downregulates synthesis of many proinflammatory cytokines including IL1, IL6, IL10, IL12 and TNF-alpha through a mechanism that partially involves suppression of NF-kappa-B. Also functions on nonhematopoietic cells, including endothelial cells where it induces vascular cell adhesion protein 1/VCAM1, which is important in the recruitment of eosinophils. Exerts its biological effects through its receptors which comprises the IL4R chain and the IL13RA1 chain, to activate JAK1 and TYK2, leading to the activation of STAT6. Aside from IL13RA1, another receptor IL13RA2 acts as a high affinity decoy for IL13 and mediates internalization and depletion of extracellular IL13. The chain is Interleukin-13 (IL13) from Canis lupus familiaris (Dog).